Here is a 565-residue protein sequence, read N- to C-terminus: Formate--tetrahydrofolate ligase (565 aa).

73–80 (TPAGEGKS) serves as a coordination point for ATP.

The protein belongs to the formate--tetrahydrofolate ligase family.

The enzyme catalyses (6S)-5,6,7,8-tetrahydrofolate + formate + ATP = (6R)-10-formyltetrahydrofolate + ADP + phosphate. It participates in one-carbon metabolism; tetrahydrofolate interconversion. This is Formate--tetrahydrofolate ligase from Arthrobacter sp. (strain FB24).